The primary structure comprises 211 residues: Uridine kinase (211 aa).

Position 12–19 (12–19) interacts with ATP; sequence GGSGSGKT.

It belongs to the uridine kinase family.

It localises to the cytoplasm. It carries out the reaction uridine + ATP = UMP + ADP + H(+). The enzyme catalyses cytidine + ATP = CMP + ADP + H(+). The protein operates within pyrimidine metabolism; CTP biosynthesis via salvage pathway; CTP from cytidine: step 1/3. Its pathway is pyrimidine metabolism; UMP biosynthesis via salvage pathway; UMP from uridine: step 1/1. In Bacillus velezensis (strain DSM 23117 / BGSC 10A6 / LMG 26770 / FZB42) (Bacillus amyloliquefaciens subsp. plantarum), this protein is Uridine kinase.